The primary structure comprises 98 residues: Large ribosomal subunit protein bL28 (98 aa).

This sequence belongs to the bacterial ribosomal protein bL28 family.

The polypeptide is Large ribosomal subunit protein bL28 (Rhizobium etli (strain ATCC 51251 / DSM 11541 / JCM 21823 / NBRC 15573 / CFN 42)).